A 294-amino-acid chain; its full sequence is MFRGVGTAIVTPFKNGELDLESYERLVRYQLENGVNALIVLGTTGESPTVNEDEREKLVSRTLEIVDGKIPVIVGAGTNSTEKTLKLVKQAEKLGANGVLVVTPYYNKPTQEGLYQHYKYISERTDLGIVVYNVPGRTGVNVLPETAARIAADLKNVVGIKEANPDIDQIDRMVSLTKQARSDFMVWSGNDDRTFYLLCAGGDGVISVVSNVAPKQMVELCAEYFSGNLEKSREVHRKLRPLMKALFVETNPIPVKAALNLMGFIENELRLPLVPASEKTVELLRNVLKESGLL.

T44 contributes to the pyruvate binding site. Y132 (proton donor/acceptor) is an active-site residue. K161 (schiff-base intermediate with substrate) is an active-site residue. Residue I206 coordinates pyruvate.

It belongs to the DapA family. As to quaternary structure, homotetramer; dimer of dimers.

The protein resides in the cytoplasm. It catalyses the reaction L-aspartate 4-semialdehyde + pyruvate = (2S,4S)-4-hydroxy-2,3,4,5-tetrahydrodipicolinate + H2O + H(+). It functions in the pathway amino-acid biosynthesis; L-lysine biosynthesis via DAP pathway; (S)-tetrahydrodipicolinate from L-aspartate: step 3/4. Functionally, catalyzes the condensation of (S)-aspartate-beta-semialdehyde [(S)-ASA] and pyruvate to 4-hydroxy-tetrahydrodipicolinate (HTPA). This chain is 4-hydroxy-tetrahydrodipicolinate synthase, found in Thermotoga sp. (strain RQ2).